Here is a 4095-residue protein sequence, read N- to C-terminus: Protein adenylyltransferase and cysteine protease IbpA (4095 aa).

Positions methionine 1–serine 97 are cleaved as a signal peptide. Binds bovine IgG2 Fc stretches follow at residues serine 972–alanine 1515 and serine 1116–glutamate 1255. 5 disordered regions span residues glutamate 1082 to glutamate 1117, lysine 1130 to aspartate 1154, glutamine 1204 to lysine 1223, threonine 1625 to threonine 1652, and glutamate 1705 to glutamate 1732. Residues tryptophan 1087–glutamate 1096 are compositionally biased toward acidic residues. Composition is skewed to basic and acidic residues over residues proline 1097 to glutamate 1117 and lysine 1130 to alanine 1139. Positions serine 1116–leucine 1247 form a coiled coil. The segment covering lysine 1716–alanine 1727 has biased composition (low complexity). A run of 12 repeats spans residues tyrosine 2250–isoleucine 2271, tyrosine 2272–alanine 2295, tyrosine 2296–leucine 2317, tyrosine 2318–proline 2343, tyrosine 2344–proline 2365, tyrosine 2366–threonine 2387, tyrosine 2388–proline 2413, tyrosine 2414–proline 2435, tyrosine 2436–proline 2457, tyrosine 2458–proline 2483, tyrosine 2484–proline 2505, and tyrosine 2506–proline 2527. Residues tyrosine 2250–proline 2527 form a 12 X 22 AA approximate repeats region. Composition is skewed to polar residues over residues serine 2592–alanine 2611 and threonine 2794–lysine 2803. Disordered stretches follow at residues serine 2592–proline 2617, threonine 2765–glycine 2809, alanine 2825–arginine 2894, leucine 2914–tyrosine 2933, leucine 2943–aspartate 3033, and asparagine 3049–aspartate 3069. The span at proline 2880 to proline 2889 shows a compositional bias: low complexity. Composition is skewed to polar residues over residues serine 2977–alanine 2996 and alanine 3005–glutamine 3018. Residues glutamine 3052–threonine 3062 show a composition bias toward basic and acidic residues. The 138-residue stretch at leucine 3218–glutamate 3355 folds into the Fido 1 domain. Residues methionine 3222 to asparagine 4095 form a yopT-like region. A binds bovine IgG2 Fc region spans residues threonine 3354–glutamate 3698. Disordered regions lie at residues glycine 3357–proline 3415 and alanine 3432–valine 3454. 2 stretches are compositionally biased toward polar residues: residues serine 3360–threonine 3379 and valine 3388–glutamine 3401. Over residues lysine 3443–valine 3454 the composition is skewed to basic and acidic residues. The interval isoleucine 3535–alanine 3557 is arm region. Residues leucine 3640–glutamate 3777 enclose the Fido 2 domain. ATP-binding positions include lysine 3670–glutamate 3671, glycine 3722–glycine 3724, arginine 3728, and glutamine 3757. Positions serine 3783–serine 3798 are enriched in basic and acidic residues. The interval serine 3783–threonine 3829 is disordered. Residues threonine 3799 to glycine 3815 are compositionally biased toward polar residues. Positions threonine 3816–threonine 3829 are enriched in low complexity. Active-site for cysteine protease activity residues include cysteine 3910, histidine 4033, and aspartate 4048.

The protein in the central section; belongs to the fic family. In the C-terminal section; belongs to the peptidase C58 family. In terms of assembly, immunoglobulin-binding protein. Post-translationally, the long form of the protein is probably processed, and/or the transcript may be subject to differential translational initiation.

Its subcellular location is the secreted. It is found in the cell outer membrane. The catalysed reaction is L-tyrosyl-[protein] + ATP = O-(5'-adenylyl)-L-tyrosyl-[protein] + diphosphate. It catalyses the reaction L-threonyl-[protein] + ATP = 3-O-(5'-adenylyl)-L-threonyl-[protein] + diphosphate. Functionally, adenylyltransferase involved in virulence by mediating the addition of adenosine 5'-monophosphate (AMP) to specific tyrosine residue of host Rho GTPases RhoA, Rac and Cdc42. The resulting AMPylation inactivates Rho GTPases, thereby inhibiting actin assembly in infected cells. Probably also acts as a cysteine protease, which may play a central role after invasion of host cell and in virulence. Possible member (with IbpB) of a 2 partner secretion. Probably able to bind bovine epithelial cells (host cells). May participate in the formation of fibrils at the surface of the bacteria. This chain is Protein adenylyltransferase and cysteine protease IbpA (ibpA), found in Histophilus somni (strain 2336) (Haemophilus somnus).